Reading from the N-terminus, the 349-residue chain is Quinolinate synthase (349 aa).

Residues His-52 and Ser-69 each coordinate iminosuccinate. Cys-114 serves as a coordination point for [4Fe-4S] cluster. Residues 140 to 142 and Ser-157 contribute to the iminosuccinate site; that span reads YVN. Cys-201 contributes to the [4Fe-4S] cluster binding site. Residues 227–229 and Thr-255 contribute to the iminosuccinate site; that span reads HPE. A [4Fe-4S] cluster-binding site is contributed by Cys-300.

It belongs to the quinolinate synthase family. Type 2 subfamily. It depends on [4Fe-4S] cluster as a cofactor.

The protein resides in the cytoplasm. The catalysed reaction is iminosuccinate + dihydroxyacetone phosphate = quinolinate + phosphate + 2 H2O + H(+). It functions in the pathway cofactor biosynthesis; NAD(+) biosynthesis; quinolinate from iminoaspartate: step 1/1. Its function is as follows. Catalyzes the condensation of iminoaspartate with dihydroxyacetone phosphate to form quinolinate. This chain is Quinolinate synthase, found in Mycobacterium bovis (strain BCG / Tokyo 172 / ATCC 35737 / TMC 1019).